The sequence spans 150 residues: Large ribosomal subunit protein bL9 (150 aa).

The protein belongs to the bacterial ribosomal protein bL9 family.

Binds to the 23S rRNA. The protein is Large ribosomal subunit protein bL9 of Neisseria meningitidis serogroup A / serotype 4A (strain DSM 15465 / Z2491).